The sequence spans 359 residues: Probable cinnamyl alcohol dehydrogenase 8A (359 aa).

C45 serves as a coordination point for Zn(2+). An NADP(+)-binding site is contributed by T47. Zn(2+)-binding residues include H67, E68, C98, C101, C104, C112, and C161. Residues T165, G186–G191, S209–K214, T249, G273, and S296–G298 contribute to the NADP(+) site.

The protein belongs to the zinc-containing alcohol dehydrogenase family. As to quaternary structure, homodimer. Zn(2+) is required as a cofactor.

The enzyme catalyses (E)-cinnamyl alcohol + NADP(+) = (E)-cinnamaldehyde + NADPH + H(+). It catalyses the reaction (E)-coniferol + NADP(+) = (E)-coniferaldehyde + NADPH + H(+). The catalysed reaction is (E)-sinapyl alcohol + NADP(+) = (E)-sinapaldehyde + NADPH + H(+). It carries out the reaction (E)-4-coumaroyl alcohol + NADP(+) = (E)-4-coumaraldehyde + NADPH + H(+). The enzyme catalyses (E)-caffeyl alcohol + NADP(+) = (E)-caffeyl aldehyde + NADPH + H(+). It functions in the pathway aromatic compound metabolism; phenylpropanoid biosynthesis. Its function is as follows. Involved in lignin biosynthesis. Catalyzes the final step specific for the production of lignin monomers. Catalyzes the NADPH-dependent reduction of coniferaldehyde, 5-hydroxyconiferaldehyde, sinapaldehyde, 4-coumaraldehyde and caffeyl aldehyde to their respective alcohols. The polypeptide is Probable cinnamyl alcohol dehydrogenase 8A (Oryza sativa subsp. japonica (Rice)).